We begin with the raw amino-acid sequence, 787 residues long: Endonuclease MutS2 (787 aa).

331 to 338 (GPNTGGKT) contacts ATP. A Smr domain is found at 711–786 (IDVRGKTSDD…EQGVTVVELK (76 aa)).

It belongs to the DNA mismatch repair MutS family. MutS2 subfamily. As to quaternary structure, homodimer. Binds to stalled ribosomes, contacting rRNA.

Endonuclease that is involved in the suppression of homologous recombination and thus may have a key role in the control of bacterial genetic diversity. Its function is as follows. Acts as a ribosome collision sensor, splitting the ribosome into its 2 subunits. Detects stalled/collided 70S ribosomes which it binds and splits by an ATP-hydrolysis driven conformational change. Acts upstream of the ribosome quality control system (RQC), a ribosome-associated complex that mediates the extraction of incompletely synthesized nascent chains from stalled ribosomes and their subsequent degradation. Probably generates substrates for RQC. The polypeptide is Endonuclease MutS2 (Caldicellulosiruptor bescii (strain ATCC BAA-1888 / DSM 6725 / KCTC 15123 / Z-1320) (Anaerocellum thermophilum)).